The chain runs to 717 residues: Fatty acid oxidation complex subunit alpha (717 aa).

An enoyl-CoA hydratase/isomerase region spans residues 1–189 (MIYQSPTIEV…KVGAIDAVVA (189 aa)). Asp-296 is a substrate binding site. The tract at residues 311 to 717 (KKVNSAAVLG…ANNGSYYQQA (407 aa)) is 3-hydroxyacyl-CoA dehydrogenase. Residues Met-324, Asp-343, 400–402 (VVE), Lys-407, and Ser-429 each bind NAD(+). Residue His-450 is the For 3-hydroxyacyl-CoA dehydrogenase activity of the active site. Residue Asn-453 coordinates NAD(+). Residues Asn-500 and Tyr-660 each coordinate substrate.

It in the N-terminal section; belongs to the enoyl-CoA hydratase/isomerase family. The protein in the C-terminal section; belongs to the 3-hydroxyacyl-CoA dehydrogenase family. In terms of assembly, heterotetramer of two alpha chains (FadB) and two beta chains (FadA).

It catalyses the reaction a (3S)-3-hydroxyacyl-CoA + NAD(+) = a 3-oxoacyl-CoA + NADH + H(+). The catalysed reaction is a (3S)-3-hydroxyacyl-CoA = a (2E)-enoyl-CoA + H2O. The enzyme catalyses a 4-saturated-(3S)-3-hydroxyacyl-CoA = a (3E)-enoyl-CoA + H2O. It carries out the reaction (3S)-3-hydroxybutanoyl-CoA = (3R)-3-hydroxybutanoyl-CoA. It catalyses the reaction a (3Z)-enoyl-CoA = a 4-saturated (2E)-enoyl-CoA. The catalysed reaction is a (3E)-enoyl-CoA = a 4-saturated (2E)-enoyl-CoA. It participates in lipid metabolism; fatty acid beta-oxidation. Involved in the aerobic and anaerobic degradation of long-chain fatty acids via beta-oxidation cycle. Catalyzes the formation of 3-oxoacyl-CoA from enoyl-CoA via L-3-hydroxyacyl-CoA. It can also use D-3-hydroxyacyl-CoA and cis-3-enoyl-CoA as substrate. The polypeptide is Fatty acid oxidation complex subunit alpha (Shewanella pealeana (strain ATCC 700345 / ANG-SQ1)).